A 159-amino-acid chain; its full sequence is Probable inactive acireductone dioxygenase 2 (159 aa).

This sequence belongs to the acireductone dioxygenase (ARD) family.

It localises to the cytoplasm. It is found in the nucleus. Probable inactive acireductone dioxygenase. The chain is Probable inactive acireductone dioxygenase 2 from Caenorhabditis briggsae.